Consider the following 376-residue polypeptide: Chaperone protein DnaJ (376 aa).

Residues 5-70 (DFYEVLGVGR…DKKAAYDQFG (66 aa)) form the J domain. Residues 132 to 210 (GLSKELRIPT…CHGEGRVEKS (79 aa)) form a CR-type zinc finger. Cys145, Cys148, Cys162, Cys165, Cys184, Cys187, Cys198, and Cys201 together coordinate Zn(2+). CXXCXGXG motif repeat units follow at residues 145 to 152 (CEPCDGSG), 162 to 169 (CGTCHGQG), 184 to 191 (CPTCHGRG), and 198 to 205 (CNKCHGEG).

The protein belongs to the DnaJ family. As to quaternary structure, homodimer. Requires Zn(2+) as cofactor.

It localises to the cytoplasm. In terms of biological role, participates actively in the response to hyperosmotic and heat shock by preventing the aggregation of stress-denatured proteins and by disaggregating proteins, also in an autonomous, DnaK-independent fashion. Unfolded proteins bind initially to DnaJ; upon interaction with the DnaJ-bound protein, DnaK hydrolyzes its bound ATP, resulting in the formation of a stable complex. GrpE releases ADP from DnaK; ATP binding to DnaK triggers the release of the substrate protein, thus completing the reaction cycle. Several rounds of ATP-dependent interactions between DnaJ, DnaK and GrpE are required for fully efficient folding. Also involved, together with DnaK and GrpE, in the DNA replication of plasmids through activation of initiation proteins. This is Chaperone protein DnaJ from Shewanella piezotolerans (strain WP3 / JCM 13877).